The following is a 105-amino-acid chain: Intracellular chorismate mutase (105 aa).

The 83-residue stretch at 23–105 folds into the Chorismate mutase domain; sequence SQPVPEIDTL…LRLGRGRLGH (83 aa). Chorismate is bound by residues Arg-61, Val-70, and Glu-74.

As to quaternary structure, homodimer. Interacts with AroG.

It localises to the cytoplasm. The catalysed reaction is chorismate = prephenate. It functions in the pathway metabolic intermediate biosynthesis; prephenate biosynthesis; prephenate from chorismate: step 1/1. Its activity is regulated as follows. The formation of the complex with AroG activates the chorismate mutase activity. In terms of biological role, catalyzes the Claisen rearrangement of chorismate to prephenate. Probably involved in the aromatic amino acid biosynthesis. This Mycobacterium bovis (strain ATCC BAA-935 / AF2122/97) protein is Intracellular chorismate mutase.